Reading from the N-terminus, the 146-residue chain is Hemoglobin cathodic subunit beta (146 aa).

The region spanning 2–146 (HFSDAERDAI…VAAALSSRYF (145 aa)) is the Globin domain. 2 residues coordinate heme b: H63 and H92.

This sequence belongs to the globin family. As to quaternary structure, heterotetramer of two alpha chains and two beta chains. In terms of tissue distribution, red blood cells.

Its function is as follows. Involved in oxygen transport from gills to the various peripheral tissues. This Hoplosternum littorale (Hassar) protein is Hemoglobin cathodic subunit beta (hbb).